Reading from the N-terminus, the 163-residue chain is Probable ribosome biogenesis protein RLP24 (163 aa).

This sequence belongs to the eukaryotic ribosomal protein eL24 family. In terms of assembly, associated with nucleolar and cytoplasmic pre-60S particles. At the end of biogenesis it dissociates from cytoplasmic pre-60S particles and is likely to be exchanged for its ribosomal homolog, RPL24.

Its subcellular location is the nucleus. It localises to the nucleolus. Functionally, involved in the biogenesis of the 60S ribosomal subunit. Ensures the docking of GTPBP4/NOG1 to pre-60S particles. The chain is Probable ribosome biogenesis protein RLP24 (Rsl24d1) from Rattus norvegicus (Rat).